Consider the following 938-residue polypeptide: MMGPPRTPLSKIDKSNPYTPCGSKVTEEKILVTVRMRPLNWREHAKYDLIAWECPDDETIVFKNPNPDKAPTKYSFDKVFEPTCATQEVYEGGSRDVALSALAGTNATIFAYGQTSSGKTFTMRGVTESVVKDIYEHIRKTQERSFVLKVSALEIYNETVVDLLNRDTGPLRLLDDPEKGTIVENLVEEVVESRQHLQHLISICEDQRQVGETALNDKSSRSHQIIRLTIHSSLREIAGCVQSFMATLNLVDLAGSERAFQTNADGLRLKEGSHINRSLLTLTTVIRKLSSGRKRDHVPYRDSKLTRILQNSLGGNARTAIICTISPALSHVEQTKKTLSFAMSAKEVTNCAKVNMVVSEKKLLKHLQQKVAKLESELRSPEPSSSTCLKSLLIEKEMKIQQMESEMKELKRQRDIAQSELDLERKAKERKGSSECEPFSQVARCLSYHTKEESIPSKSVPSSRRTARDRRKDNVRQSLTSADPTALVQEIRLLEKHQKKLGEEANQALDLIHKEVTSHKLGDQQAAEKVAKMLSEIRDMQKSNLLTEEIVVGDKANLKEEINRLNSQEIAALEKKLECVQNTIDMLVSSFQTDEQTPDFRTQVKKKRLLPFGLSNSPNLQHMIRGPCSPLSGTENKDPESNVVSANSAPVSFGATPPKRDDNRCRTQSREGTPVSRQANSVDIKRMNRMYKNAAEENIRNIKSYVTGLKERVAKLQYQKQLLVCQVLELEANETGAASEYDATDESQMDWPLCFEEQRKQIIMLWHLCHISIIHRTQFYMLFKGDPADQIYMEVELRRLTWLEQHLAELGNASPALLGDEPASYVASSIRALKQEREYLAKRVNTKLGAEEREMLYLKWDVPPVGKQRRQQFINKLWTDPHNMQHVRESAEIVAKLVGFCDSGETIRKEMFELNFASPSDKKTWMMGWNFISNLLHL.

The Kinesin motor domain occupies 29 to 348; the sequence is KILVTVRMRP…LSFAMSAKEV (320 aa). 113–120 serves as a coordination point for ATP; sequence GQTSSGKT. A coiled-coil region spans residues 357 to 431; that stretch reads VVSEKKLLKH…DLERKAKERK (75 aa). Residues 450–481 are disordered; the sequence is TKEESIPSKSVPSSRRTARDRRKDNVRQSLTS. A coiled-coil region spans residues 555–590; that stretch reads KANLKEEINRLNSQEIAALEKKLECVQNTIDMLVSS. The disordered stretch occupies residues 628-678; it reads CSPLSGTENKDPESNVVSANSAPVSFGATPPKRDDNRCRTQSREGTPVSRQ. The segment covering 641–652 has biased composition (low complexity); the sequence is SNVVSANSAPVS. Basic and acidic residues predominate over residues 658–669; that stretch reads PKRDDNRCRTQS.

It belongs to the TRAFAC class myosin-kinesin ATPase superfamily. Kinesin family. KIN-7 subfamily. As to quaternary structure, interacts with ANP3. Interacts with TIO/FU. In terms of tissue distribution, expressed in roots, stems, flowers, pollen mother cells and embryos.

It is found in the cytoplasm. The protein localises to the cytoskeleton. It localises to the phragmoplast. Probable plus end-directed motor protein that functions in the NACK-PQR (ANP3-MKK6-MPK4) MAP kinase signaling pathway, which is essential for somatic cell cytokinesis, especially for the cell-plate formation and its expansion. May regulate the activity and the localization of ANP3, probably by association through the non-catalytic region of the kinase. Functionally redundant with NACK1 and essential to promote the progression of cytokinesis and for cellularization (formation of the cell plate) during microgametogenesis and megagametogenesis. The chain is Kinesin-like protein KIN-7B from Arabidopsis thaliana (Mouse-ear cress).